Here is a 125-residue protein sequence, read N- to C-terminus: uncharacterized protein (125 aa).

Belongs to the asfivirus B125R family.

This is an uncharacterized protein from Ornithodoros (relapsing fever ticks).